Here is a 62-residue protein sequence, read N- to C-terminus: Agnoprotein (62 aa).

The Cytoplasmic portion of the chain corresponds to 1-23; that stretch reads MVLRRLSRQASVKVRRSWTESKK. The helical; Signal-anchor for type II membrane protein transmembrane segment at 24 to 40 threads the bilayer; the sequence is TAQRLFVFVLELLLQFC. Topologically, residues 41–62 are extracellular; the sequence is EGEDTVDGKRKKPERLTEKPES.

This sequence belongs to the polyomaviruses agnoprotein family. Homooligomer. Interacts with VP1. Interacts with large T antigen; this interaction may impact upon the activity of T-antigen on the control of viral gene transcription and replication. Interacts with small t antigen. Interacts with host CBX5; this interaction induces the dissociation of CBX5 from LBR, resulting in destabilization of the nuclear envelope. In terms of processing, phosphorylated by host kinase. Phosphorylation segregates agnoprotein in cytoplasm, whereas unphosphorylated agnoprotein migrate to the nucleus.

Its subcellular location is the host cytoplasm. The protein localises to the host nucleus membrane. It is found in the host rough endoplasmic reticulum membrane. The protein resides in the host cell membrane. Alters the structure of the nuclear envelope by interacting with host CBX5 and disrupting CBX5 association with LBR. Involved in the perinuclear-nuclear localization of the capsid protein VP1 during virion assembly and maturation. Plays an important role in the release of progeny virions from infected cells and in viral propagation, probably by acting as a viral ionic channel in the host plasma membrane. Allows influx of extracellular calcium ions in the host cell. May contribute to viral genome transcription and translation of viral late proteins. The sequence is that of Agnoprotein from Simian virus 40 (SV40).